Reading from the N-terminus, the 150-residue chain is MNIILLDKIANLGGLGDQVTVKSGYARNFLFPQGKAVPATKDNVEKFEARRAELEAKIAEQLAAANARAEKVAELAEVTIAAPAGDEGKLFGSVGTRDIADAITAAGVEVQKAEVKLPTGTLRETGEYDIDLQLHSDVITSIKVIIIAEA.

This sequence belongs to the bacterial ribosomal protein bL9 family.

Its function is as follows. Binds to the 23S rRNA. This chain is Large ribosomal subunit protein bL9, found in Alteromonas mediterranea (strain DSM 17117 / CIP 110805 / LMG 28347 / Deep ecotype).